Reading from the N-terminus, the 200-residue chain is Recombination protein RecR (200 aa).

The C4-type zinc-finger motif lies at C58–C73. A Toprim domain is found at D81–P176.

This sequence belongs to the RecR family.

Its function is as follows. May play a role in DNA repair. It seems to be involved in an RecBC-independent recombinational process of DNA repair. It may act with RecF and RecO. This Pelotomaculum thermopropionicum (strain DSM 13744 / JCM 10971 / SI) protein is Recombination protein RecR.